A 515-amino-acid polypeptide reads, in one-letter code: Ecdysteroid UDP-glucosyltransferase (515 aa).

A signal peptide spans 1-31; that stretch reads MKMIILVVSLHVLRNSAAVRVLCMFPTPSYS.

This sequence belongs to the UDP-glycosyltransferase family.

Functionally, catalyzes the transfer of glucose from UDP-glucose to ecdysteroids which are insect molting hormones. Expression of egt interferes with normal insect development and block molting. This chain is Ecdysteroid UDP-glucosyltransferase (EGT), found in Spodoptera littoralis nuclear polyhedrosis virus (SlNPV).